Here is a 333-residue protein sequence, read N- to C-terminus: T-cell surface glycoprotein CD1b (333 aa).

An N-terminal signal peptide occupies residues 1–17; that stretch reads MLLLPFQLLAVLFPGGN. The Extracellular segment spans residues 18–303; the sequence is SEHAFQGPTS…YWRNPTSIGS (286 aa). Asn-38, Asn-75, and Asn-146 each carry an N-linked (GlcNAc...) asparagine glycan. Intrachain disulfides connect Cys-120–Cys-184, Cys-149–Cys-163, and Cys-224–Cys-279. The region spanning 185-295 is the Ig-like domain; the sequence is PRYLLGVLNA…LEGQDIILYW (111 aa). Asn-258 carries an N-linked (GlcNAc...) asparagine glycan. A helical transmembrane segment spans residues 304–324; sequence IVLAIIVPSLLLLLCLALWYM. Topologically, residues 325–333 are cytoplasmic; the sequence is RRRSYQNIP. The short motif at 329–332 is the Internalization signal element; the sequence is YQNI.

In terms of assembly, heterodimer with B2M (beta-2-microglobulin). Interacts with saposin C. Expressed on cortical thymocytes, on certain T-cell leukemias, and in various other tissues.

The protein localises to the cell membrane. It is found in the endosome membrane. Its subcellular location is the lysosome membrane. Functionally, antigen-presenting protein that binds self and non-self lipid and glycolipid antigens and presents them to T-cell receptors on natural killer T-cells. The protein is T-cell surface glycoprotein CD1b (CD1B) of Homo sapiens (Human).